A 126-amino-acid chain; its full sequence is Glycine cleavage system H protein (126 aa).

In terms of domain architecture, Lipoyl-binding spans 22-104; the sequence is VAYVGITDYA…YGEGWLIKMK (83 aa). N6-lipoyllysine is present on lysine 63.

Belongs to the GcvH family. The glycine cleavage system is composed of four proteins: P, T, L and H. Requires (R)-lipoate as cofactor.

The glycine cleavage system catalyzes the degradation of glycine. The H protein shuttles the methylamine group of glycine from the P protein to the T protein. In Bacteroides fragilis (strain YCH46), this protein is Glycine cleavage system H protein.